The chain runs to 259 residues: MNQSDENIGKAGGIQVIARAASIMRALGSHPHGLSLAAIAQLVGLPRSTVQRIINALEEEFLVEALGPAGGFRLGPALGQLINQAQTDILSLVKPYLRSLAEELDESVCLASLAGDKIYVLDRIVSERELRVVFPIGINVPAAATAAGKVLLAALPDETLQAALGEQLPVLTSNTLGRKALVKQLSEVRQSGVASDLDEHIDGVCSFATLLDTYLGYYSLAIVMPSSRASKQSDLIKKALLQSKLNIERAIGRASKKAP.

An HTH iclR-type domain is found at 14 to 76 (IQVIARAASI…GPAGGFRLGP (63 aa)). The H-T-H motif DNA-binding region spans 36 to 59 (LAAIAQLVGLPRSTVQRIINALEE). The 165-residue stretch at 89–253 (ILSLVKPYLR…KLNIERAIGR (165 aa)) folds into the IclR-ED domain.

In terms of biological role, represses the expression of the ttgGHI and ttgVW operons. Binds to the ttgGHI / ttgVW intergenic region, probably preventing binding of RNA polymerase; ttgV dissociates from this region in the presence of 1-hexanol. The sequence is that of HTH-type transcriptional regulator TtgV (ttgV) from Pseudomonas putida (strain DOT-T1E).